Reading from the N-terminus, the 57-residue chain is Large ribosomal subunit protein bL32 (57 aa).

Over residues 1–19 the composition is skewed to basic residues; sequence MATPKRRMSRANTRSRRSQ. The disordered stretch occupies residues 1 to 21; it reads MATPKRRMSRANTRSRRSQWK.

This sequence belongs to the bacterial ribosomal protein bL32 family.

This Mycobacterium ulcerans (strain Agy99) protein is Large ribosomal subunit protein bL32.